A 240-amino-acid polypeptide reads, in one-letter code: Pyridoxine 5'-phosphate synthase (240 aa).

Asn7 contacts 3-amino-2-oxopropyl phosphate. A 1-deoxy-D-xylulose 5-phosphate-binding site is contributed by 9–10 (DH). Arg18 provides a ligand contact to 3-amino-2-oxopropyl phosphate. His43 functions as the Proton acceptor in the catalytic mechanism. 1-deoxy-D-xylulose 5-phosphate is bound by residues Arg45 and His50. The active-site Proton acceptor is Glu70. A 1-deoxy-D-xylulose 5-phosphate-binding site is contributed by Thr100. His191 acts as the Proton donor in catalysis. 3-amino-2-oxopropyl phosphate is bound by residues Gly192 and 213-214 (GH).

Belongs to the PNP synthase family. As to quaternary structure, homooctamer; tetramer of dimers.

The protein resides in the cytoplasm. It carries out the reaction 3-amino-2-oxopropyl phosphate + 1-deoxy-D-xylulose 5-phosphate = pyridoxine 5'-phosphate + phosphate + 2 H2O + H(+). Its pathway is cofactor biosynthesis; pyridoxine 5'-phosphate biosynthesis; pyridoxine 5'-phosphate from D-erythrose 4-phosphate: step 5/5. In terms of biological role, catalyzes the complicated ring closure reaction between the two acyclic compounds 1-deoxy-D-xylulose-5-phosphate (DXP) and 3-amino-2-oxopropyl phosphate (1-amino-acetone-3-phosphate or AAP) to form pyridoxine 5'-phosphate (PNP) and inorganic phosphate. The polypeptide is Pyridoxine 5'-phosphate synthase (Crocosphaera subtropica (strain ATCC 51142 / BH68) (Cyanothece sp. (strain ATCC 51142))).